The sequence spans 338 residues: MTARTDPGALRHDWTREELQALFDLPFNDLLFEAQLVHRRWFKADEVQMSTLLSIKTGGCPEDCGYCAQSSKFDTGLKASKLMEVEKVLAEARKAKEAGATRYCMGAAWREPKDRDMDMVCAMVEGIKDMGMETCMTLGMLSGQQVHRLAQSGLDYYNHNIDTSEEYYPKVISTRTYQDRLETLERVRNAGINVCSGGIVGMGESPSDRIGMLMTLANLEEHPQSVPINMLMPVEGTALGASEKIDPIDFVRLIAVARIAMPQSVVRLSAGREHMSEETQALCFLAGANSIFIGEKLLTTKNPEADKDQRLFAKLGIRSMPAHSCPSEKDVSADRKAG.

In terms of domain architecture, Radical SAM core spans 45 to 272; that stretch reads DEVQMSTLLS…QSVVRLSAGR (228 aa). [4Fe-4S] cluster contacts are provided by cysteine 60, cysteine 64, and cysteine 67. [2Fe-2S] cluster is bound by residues cysteine 104, cysteine 135, cysteine 195, and arginine 267.

The protein belongs to the radical SAM superfamily. Biotin synthase family. Homodimer. Requires [4Fe-4S] cluster as cofactor. The cofactor is [2Fe-2S] cluster.

The enzyme catalyses (4R,5S)-dethiobiotin + (sulfur carrier)-SH + 2 reduced [2Fe-2S]-[ferredoxin] + 2 S-adenosyl-L-methionine = (sulfur carrier)-H + biotin + 2 5'-deoxyadenosine + 2 L-methionine + 2 oxidized [2Fe-2S]-[ferredoxin]. It functions in the pathway cofactor biosynthesis; biotin biosynthesis; biotin from 7,8-diaminononanoate: step 2/2. Functionally, catalyzes the conversion of dethiobiotin (DTB) to biotin by the insertion of a sulfur atom into dethiobiotin via a radical-based mechanism. The polypeptide is Biotin synthase (Parvibaculum lavamentivorans (strain DS-1 / DSM 13023 / NCIMB 13966)).